Reading from the N-terminus, the 481-residue chain is Protein nucleotidyltransferase YdiU (481 aa).

Positions 85, 87, 88, 108, 120, 121, 172, and 179 each coordinate ATP. Asp248 functions as the Proton acceptor in the catalytic mechanism. 2 residues coordinate Mg(2+): Asn249 and Asp258. Asp258 serves as a coordination point for ATP.

This sequence belongs to the SELO family. Mg(2+) serves as cofactor. It depends on Mn(2+) as a cofactor.

It catalyses the reaction L-seryl-[protein] + ATP = 3-O-(5'-adenylyl)-L-seryl-[protein] + diphosphate. The catalysed reaction is L-threonyl-[protein] + ATP = 3-O-(5'-adenylyl)-L-threonyl-[protein] + diphosphate. It carries out the reaction L-tyrosyl-[protein] + ATP = O-(5'-adenylyl)-L-tyrosyl-[protein] + diphosphate. The enzyme catalyses L-histidyl-[protein] + UTP = N(tele)-(5'-uridylyl)-L-histidyl-[protein] + diphosphate. It catalyses the reaction L-seryl-[protein] + UTP = O-(5'-uridylyl)-L-seryl-[protein] + diphosphate. The catalysed reaction is L-tyrosyl-[protein] + UTP = O-(5'-uridylyl)-L-tyrosyl-[protein] + diphosphate. In terms of biological role, nucleotidyltransferase involved in the post-translational modification of proteins. It can catalyze the addition of adenosine monophosphate (AMP) or uridine monophosphate (UMP) to a protein, resulting in modifications known as AMPylation and UMPylation. In Cereibacter sphaeroides (strain KD131 / KCTC 12085) (Rhodobacter sphaeroides), this protein is Protein nucleotidyltransferase YdiU.